Here is a 2129-residue protein sequence, read N- to C-terminus: Transcription initiation factor TFIID subunit 1 (2129 aa).

The Protein kinase 1 domain maps to M1–V423. Disordered regions lie at residues A77–E233, F246–A348, T377–S405, and A445–P497. Residues P79 to D88 are compositionally biased toward acidic residues. Basic and acidic residues-rich tracts occupy residues V110–D121, V159–L170, and D200–D215. A compositionally biased stretch (basic residues) spans R263 to N273. Residues T280 to P289 are compositionally biased toward polar residues. Residues S286, S288, and S290 each carry the phosphoserine modification. Phosphoserine; by autocatalysis is present on S315. The span at L388–E398 shows a compositional bias: basic and acidic residues. Low complexity predominate over residues G470 to A494. At S603 the chain carries Phosphoserine. Disordered stretches follow at residues K1016–D1038, L1149–N1208, A1296–K1336, G1368–E1391, and K1415–K1435. Basic and acidic residues predominate over residues Q1019 to P1028. Residues N1151 to T1160 show a composition bias toward polar residues. Positions S1163–G1183 are enriched in basic and acidic residues. A compositionally biased stretch (gly residues) spans G1184–G1193. Residues G1368–S1379 show a composition bias toward polar residues. The short motif at G1442 to V1448 is the Nuclear localization signal element. Bromo domains follow at residues R1466–R1574 and L1588–F1696. The Protein kinase 2 domain occupies M1515–S2065. Disordered regions lie at residues T1710–G1872, L1973–A1992, N2018–R2042, and Q2101–F2129. A Phosphoserine modification is found at S1740. Acidic residues predominate over residues L1836–N1863. A compositionally biased stretch (acidic residues) spans I2023 to D2037. Positions Q2101–Q2120 are enriched in low complexity.

The protein belongs to the TAF1 family. In terms of assembly, belongs to the TFIID complex which is composed of TATA binding protein (Tbp) and a number of TBP-associated factors (Tafs). Taf1 is the largest component of the TFIID complex. Interacts with Tbp, Taf2, Taf4 and Taf6. It depends on Mg(2+) as a cofactor.

Its subcellular location is the nucleus. The enzyme catalyses L-seryl-[protein] + ATP = O-phospho-L-seryl-[protein] + ADP + H(+). It catalyses the reaction L-threonyl-[protein] + ATP = O-phospho-L-threonyl-[protein] + ADP + H(+). With respect to regulation, autophosphorylates on Ser residues. Functionally, TFIID is a multimeric protein complex that plays a central role in mediating promoter responses to various activators and repressors. Largest component and core scaffold of the complex. Contains N- and C-terminal Ser/Thr kinase domains which can autophosphorylate or transphosphorylate other transcription factors. Possesses DNA-binding activity. Essential for progression of the G1 phase of the cell cycle. Negative regulator of the TATA box-binding activity of Tbp. This Drosophila melanogaster (Fruit fly) protein is Transcription initiation factor TFIID subunit 1 (Taf1).